The chain runs to 509 residues: L-aspartate oxidase (509 aa).

FAD contacts are provided by residues 14–17 (SGIA), 45–52 (STDWAQGG), and Asp214. The active-site Proton donor/acceptor is Arg279. Residues Glu358 and 374-375 (SL) each bind FAD. Disordered regions lie at residues 389–412 (AAGDDRAPAPSEPPELRDRDPDLP) and 486–509 (NPESAGCHHRSDEAAAEEAPDAGH). The span at 402-412 (PELRDRDPDLP) shows a compositional bias: basic and acidic residues. Residues 499–509 (AAAEEAPDAGH) are compositionally biased toward acidic residues.

This sequence belongs to the FAD-dependent oxidoreductase 2 family. NadB subfamily. Requires FAD as cofactor.

The protein resides in the cytoplasm. The enzyme catalyses L-aspartate + O2 = iminosuccinate + H2O2. It functions in the pathway cofactor biosynthesis; NAD(+) biosynthesis; iminoaspartate from L-aspartate (oxidase route): step 1/1. In terms of biological role, catalyzes the oxidation of L-aspartate to iminoaspartate, the first step in the de novo biosynthesis of NAD(+). In Halobacterium salinarum (strain ATCC 700922 / JCM 11081 / NRC-1) (Halobacterium halobium), this protein is L-aspartate oxidase (nadB).